Reading from the N-terminus, the 283-residue chain is Pantothenate synthetase (283 aa).

ATP is bound at residue 30 to 37 (MGNLHDGH). Residue His37 is the Proton donor of the active site. Gln61 provides a ligand contact to (R)-pantoate. Gln61 contacts beta-alanine. 149 to 152 (GEKD) lines the ATP pocket. Gln155 contributes to the (R)-pantoate binding site. 186-189 (LSSR) contributes to the ATP binding site.

This sequence belongs to the pantothenate synthetase family. As to quaternary structure, homodimer.

Its subcellular location is the cytoplasm. It carries out the reaction (R)-pantoate + beta-alanine + ATP = (R)-pantothenate + AMP + diphosphate + H(+). The protein operates within cofactor biosynthesis; (R)-pantothenate biosynthesis; (R)-pantothenate from (R)-pantoate and beta-alanine: step 1/1. In terms of biological role, catalyzes the condensation of pantoate with beta-alanine in an ATP-dependent reaction via a pantoyl-adenylate intermediate. This Escherichia fergusonii (strain ATCC 35469 / DSM 13698 / CCUG 18766 / IAM 14443 / JCM 21226 / LMG 7866 / NBRC 102419 / NCTC 12128 / CDC 0568-73) protein is Pantothenate synthetase.